The following is a 64-amino-acid chain: Crotamine CRO3 (64 aa).

The N-terminal stretch at 1–22 (MILYLLFAFLFLAFLSEPGNAY) is a signal peptide. Disulfide bonds link C25-C57, C32-C51, and C39-C58.

This sequence belongs to the crotamine-myotoxin family. In terms of assembly, monomer. As to expression, expressed by the venom gland.

Its subcellular location is the secreted. Cationic peptide that possesses multiple functions. It acts as a cell-penetrating peptide (CPP), and as a potent voltage-gated potassium channel (Kv) inhibitor. It exhibits antimicrobial activities, hind limb paralysis, and severe muscle necrosis by a non-enzymatic mechanism. The chain is Crotamine CRO3 (CRO3) from Crotalus durissus terrificus (South American rattlesnake).